Consider the following 359-residue polypeptide: Malonyl-CoA reductase (359 aa).

Residue Thr16–Val19 participates in NADP(+) binding. Residue Cys153 is the Acyl-thioester intermediate of the active site. Ser183–Gly184 contributes to the NADP(+) binding site. Residue His248 is the Proton acceptor of the active site. Asn335–Thr336 serves as a coordination point for NADP(+).

It belongs to the aspartate-semialdehyde dehydrogenase family. As to quaternary structure, homodimer and possibly a tetramer. Requires Mg(2+) as cofactor. The cofactor is Mn(2+).

The enzyme catalyses 3-oxopropanoate + NADP(+) + CoA = malonyl-CoA + NADPH + H(+). Its activity is regulated as follows. Activated by dithioerythritol (5 mM) and inhibited by the thiol-blocking agent iodoacetamide (0.1 mM). Functionally, catalyzes the reduction of malonyl-CoA to malonate semialdehyde, a key step in the 3-hydroxypropanoate and the 3-hydroxypropanoate/4-hydroxybutyrate cycles. Can also use succinyl-CoA and succinate semialdehyde as substrates but at a lower rate than malonyl-CoA. This is Malonyl-CoA reductase (mcr) from Sulfurisphaera tokodaii (strain DSM 16993 / JCM 10545 / NBRC 100140 / 7) (Sulfolobus tokodaii).